The following is a 530-amino-acid chain: Histone-arginine methyltransferase CARMER (530 aa).

Residues 141 to 450 (ASQYFQFYGY…QSYDVTIDLH (310 aa)) form the SAM-dependent MTase PRMT-type domain. 6 residues coordinate S-adenosyl-L-methionine: Q154, R163, G187, E209, E238, and T266. R501 bears the Asymmetric dimethylarginine; by autocatalysis mark.

Belongs to the class I-like SAM-binding methyltransferase superfamily. Protein arginine N-methyltransferase family. In terms of assembly, homodimer. In terms of processing, the dimethylated protein is the major form.

It is found in the cytoplasm. The protein localises to the nucleus. It carries out the reaction L-arginyl-[protein] + 2 S-adenosyl-L-methionine = N(omega),N(omega)-dimethyl-L-arginyl-[protein] + 2 S-adenosyl-L-homocysteine + 2 H(+). Methylates (mono- and asymmetric dimethylation) the guanidino nitrogens of arginyl residues in proteins. May methylate histone H3 at 'Arg-17' and activate transcription via chromatin remodeling. In Drosophila sechellia (Fruit fly), this protein is Histone-arginine methyltransferase CARMER (Art4).